Reading from the N-terminus, the 1514-residue chain is Helicase SWR1 (1514 aa).

The HSA domain maps to 339 to 411; sequence ISYFYKQQDL…EERHKKSLAR (73 aa). Residues 465-480 show a composition bias toward polar residues; the sequence is QVNDDGRSSTPSSDSN. Disordered regions lie at residues 465 to 524 and 538 to 641; these read QVND…PTDE and FNGS…KDQV. The segment covering 484–508 has biased composition (acidic residues); it reads SESDDDMDDELSTSSDEDEEVDADV. A compositionally biased stretch (polar residues) spans 513–524; it reads SPASTEATPTDE. The segment covering 547–563 has biased composition (basic and acidic residues); it reads SRNKDEKFPTLDKHESS. Over residues 564-586 the composition is skewed to low complexity; that stretch reads SSESSVMTGEESSIYSSSENESQ. The span at 588–597 shows a compositional bias: basic and acidic residues; sequence ENDRESDDKT. The span at 612–623 shows a compositional bias: acidic residues; that stretch reads SDGDLDLDDSED. The Helicase ATP-binding domain occupies 708–873; sequence ASLYNNHTNG…WSLLYFLMPQ (166 aa). Residue 721–728 coordinates ATP; sequence DEMGLGKT. Positions 824 to 827 match the DEAH box motif; sequence DEAH. Residues 1247–1400 enclose the Helicase C-terminal domain; that stretch reads KLQKLAILLQ…NVVIQEGDFT (154 aa). The disordered stretch occupies residues 1469-1490; sequence NDDFDESTEKKAANEEEENHAE. The span at 1475–1490 shows a compositional bias: basic and acidic residues; it reads STEKKAANEEEENHAE.

It belongs to the SNF2/RAD54 helicase family. SWR1 subfamily. Component of the SWR1 chromatin-remodeling complex composed of at least ACT1, ARP4, RVB1, RVB2, ARP6, YAF9, VPS71, VPS72, SWC3, SWC4, SWC5, SWC7 and SWR1, and perhaps BDF1.

The protein localises to the nucleus. It catalyses the reaction ATP + H2O = ADP + phosphate + H(+). Functionally, catalytic component of the SWR1 complex which mediates the ATP-dependent exchange of histone H2A for the H2A variant HZT1 leading to transcriptional regulation of selected genes by chromatin remodeling. This is Helicase SWR1 (SWR1) from Saccharomyces cerevisiae (strain ATCC 204508 / S288c) (Baker's yeast).